We begin with the raw amino-acid sequence, 346 residues long: L-malyl-CoA/beta-methylmalyl-CoA lyase (346 aa).

Mg(2+)-binding residues include Glu-148 and Asp-177. Substrate contacts are provided by residues 176-177 (VD) and 253-254 (LH).

Belongs to the HpcH/HpaI aldolase family. Requires Mg(2+) as cofactor. The cofactor is Mn(2+).

It catalyses the reaction (S)-malyl-CoA = glyoxylate + acetyl-CoA. The enzyme catalyses (2R,3S)-beta-methylmalyl-CoA = propanoyl-CoA + glyoxylate. Functionally, involved in the methylaspartate cycle. Catalyzes the reversible cleavage of beta-methylmalyl-CoA to propionyl-CoA and glyoxylate, as well as the reversible cleavage of (S)-malyl-CoA to acetyl-CoA and glyoxylate. In addition, it has a small malyl-CoA thioesterase activity. It can also catalyze the cleavage of (S)-citramalyl-CoA to acetyl-CoA and pyruvate. The protein is L-malyl-CoA/beta-methylmalyl-CoA lyase (citE1) of Haloarcula marismortui (strain ATCC 43049 / DSM 3752 / JCM 8966 / VKM B-1809) (Halobacterium marismortui).